A 356-amino-acid polypeptide reads, in one-letter code: Carbohydrate sulfotransferase 10 (356 aa).

Residues 1-6 (MHHQWL) lie on the Cytoplasmic side of the membrane. A helical; Signal-anchor for type II membrane protein membrane pass occupies residues 7–27 (LLAACFWVIFMFMVASKFITL). At 28–356 (TFKDPDGYSA…GYQKPDFLLN (329 aa)) the chain is on the lumenal side. Residue Asn-99 is glycosylated (N-linked (GlcNAc...) asparagine). 3'-phosphoadenylyl sulfate-binding positions include 127–133 (PKVGNTQ) and 189–197 (RDPFERLIS). N-linked (GlcNAc...) asparagine glycans are attached at residues Asn-228 and Asn-316.

The protein belongs to the sulfotransferase 2 family. In myogenic progenitors, it is ubiquitously expressed.

The protein localises to the golgi apparatus membrane. It carries out the reaction 3-O-{beta-D-GlcA-(1-&gt;[3)-alpha-D-Xyl-(1-&gt;3)-beta-D-GlcA-(1-&gt;](n)-4)-beta-D-Xyl-(1-&gt;4)-Rib-ol-P-Rib-ol-P-3-beta-D-GalNAc-(1-&gt;3)-beta-D-GlcNAc-(1-&gt;4)-O-6-P-alpha-D-Man}-L-Thr-[protein] + 3'-phosphoadenylyl sulfate = 3-O-{O-3-S-beta-D-GlcA-(1-&gt;[3)-alpha-D-Xyl-(1-&gt;3)-beta-D-GlcA-(1-&gt;](n)-4)-beta-D-Xyl-(1-&gt;4)-Rib-ol-P-Rib-ol-P-3-beta-D-GalNAc-(1-&gt;3)-beta-D-GlcNAc-(1-&gt;4)-O-6-P-alpha-D-Man}-L-Thr-[protein] + adenosine 3',5'-bisphosphate + H(+). It catalyses the reaction 17beta-estradiol 3-O-(beta-D-glucuronate) + 3'-phosphoadenylyl sulfate = 17beta-estradiol 3-O-(3-sulfo-beta-D-glucuronate) + adenosine 3',5'-bisphosphate + H(+). The enzyme catalyses 17beta-estradiol 3-O-(beta-D-glucuronate) 17-sulfate + 3'-phosphoadenylyl sulfate = 17beta-estradiol 3-O-(3-sulfo-beta-D-glucuronate) 17-sulfate + adenosine 3',5'-bisphosphate + H(+). The catalysed reaction is 17beta-estradiol 17-O-(beta-D-glucuronate) + 3'-phosphoadenylyl sulfate = 17beta-estradiol 17-O-(3-sulfo-beta-D-glucuronate) + adenosine 3',5'-bisphosphate + H(+). It carries out the reaction 16alpha,17beta-estriol 3-O-(beta-D-glucuronate) + 3'-phosphoadenylyl sulfate = 16alpha,17beta-estriol 3-O-(3-sulfo-beta-D-glucuronate) + adenosine 3',5'-bisphosphate + H(+). It catalyses the reaction 16alpha,17beta-estriol 16-O-(beta-D-glucuronate) + 3'-phosphoadenylyl sulfate = 16alpha,17beta-estriol 16-O-(3-sulfo-beta-D-glucuronate) + adenosine 3',5'-bisphosphate + H(+). The enzyme catalyses 16alpha,17beta-estriol 17-O-(beta-D-glucuronate) + 3'-phosphoadenylyl sulfate = 16alpha,17beta-estriol 17-O-(3-sulfo-beta-D-glucuronate) + adenosine 3',5'-bisphosphate + H(+). The catalysed reaction is estrone 3-O-(beta-D-glucuronate) + 3'-phosphoadenylyl sulfate = estrone 3-O-(3-sulfo-beta-D-glucuronate) + adenosine 3',5'-bisphosphate + H(+). It carries out the reaction 3alpha,20alpha-dihydroxy-5beta-pregnane 3-O-(beta-D-glucuronate) + 3'-phosphoadenylyl sulfate = 3alpha,20alpha-dihydroxy-5beta-pregnane 3-O-(3-sulfo-beta-D-glucuronate) + adenosine 3',5'-bisphosphate + H(+). It catalyses the reaction testosterone 17-O-(beta-D-glucuronate) + 3'-phosphoadenylyl sulfate = testosterone 17-O-(3-sulfo-beta-D-glucuronate) + adenosine 3',5'-bisphosphate + H(+). The enzyme catalyses 3beta-androst-5-en-17-one 3-O-(beta-D-glucuronate) + 3'-phosphoadenylyl sulfate = 3beta-androst-5-en-17-one 3-O-(3-sulfo-beta-D-glucuronate) + adenosine 3',5'-bisphosphate + H(+). The catalysed reaction is 3alpha,17alpha-dihydroxy-5beta-androstane-11-one-17beta-carboxylate 3-O-(beta-D-glucuronate) + 3'-phosphoadenylyl sulfate = 3alpha,17alpha-dihydroxy-5beta-androstane-11-one-17beta-carboxylate 3-O-(3-sulfo-beta-D-glucuronate) + adenosine 3',5'-bisphosphate + H(+). It carries out the reaction 3alpha-hydroxyetiocholan-17-one 3-O-(beta-D-glucuronate) + 3'-phosphoadenylyl sulfate = 3alpha-hydroxyetiocholan-17-one 3-O-(3-sulfo-beta-D-glucuronate) + adenosine 3',5'-bisphosphate + H(+). It participates in steroid metabolism. Its pathway is protein modification; carbohydrate sulfation. Catalyzes the transfer of sulfate from 3'-phosphoadenylyl sulfate (PAPS) to position 3 of terminal glucuronic acid of both protein- and lipid-linked oligosaccharides. Participates in biosynthesis of HNK-1 carbohydrate structure 3-O-sulfo-beta-D-GlcA-(1-&gt;3)-beta-D-Gal-(1-&gt;4)-D-GlcNAc-R, a sulfated glucuronyl-lactosaminyl residue carried by many neural recognition molecules, which is involved in cell interactions during ontogenetic development and in synaptic plasticity in the adult. May be indirectly involved in synapse plasticity of the hippocampus, via its role in HNK-1 biosynthesis. Sulfates terminal glucuronyl residue of the laminin globular (LG)-domain binding epitope on DAG1/alpha-dystroglycan and prevents further polymerization by LARGE1 glycosyltransferase. Likely defines the chain length of LG epitope, conferring binding specificity to extracellular matrix components. Plays a role in down-regulating the steroid hormones. Sulfates glucuronidated estrogens and androgens with an impact in hormone cycle and fertility. Has a preference for glucuronyl moiety at the 3-hydroxyl group of a sterol ring rather than the 17-hydroxyl group, showing high catalytic efficiency for 17beta-estradiol 3-O-(beta-D-glucuronate) and dehydroepiandrosterone 3-O-(beta-D-glucuronate) hormones. The protein is Carbohydrate sulfotransferase 10 (Chst10) of Rattus norvegicus (Rat).